The primary structure comprises 111 residues: Large ribosomal subunit protein uL22 (111 aa).

The protein belongs to the universal ribosomal protein uL22 family. In terms of assembly, part of the 50S ribosomal subunit.

This protein binds specifically to 23S rRNA; its binding is stimulated by other ribosomal proteins, e.g. L4, L17, and L20. It is important during the early stages of 50S assembly. It makes multiple contacts with different domains of the 23S rRNA in the assembled 50S subunit and ribosome. Functionally, the globular domain of the protein is located near the polypeptide exit tunnel on the outside of the subunit, while an extended beta-hairpin is found that lines the wall of the exit tunnel in the center of the 70S ribosome. The polypeptide is Large ribosomal subunit protein uL22 (Clostridium acetobutylicum (strain ATCC 824 / DSM 792 / JCM 1419 / IAM 19013 / LMG 5710 / NBRC 13948 / NRRL B-527 / VKM B-1787 / 2291 / W)).